Consider the following 262-residue polypeptide: MGRISDKFTELKEKREKALVSYLMVGYPDYETSLKAFKEVLKNGTDILEIGFPFSDPVADGPTIQVAHEVALKNGIRFEDVLELSETLRKEFPDIPFLLMTYYNPIFRIGLEKFCRLSREKGIDGFIVPDLPPEEAEELKAVMKKYVLSFVPLGAPTSTRKRIKLICEAADEMTYFVSVTGTTGAREKLPYERIKKKVEEYRELCDKPVVVGFGVSKKEHAREIGSFADGVVVGSALVKLAGQKKIEDLGNLVKELKEGLRE.

Catalysis depends on proton acceptor residues Glu-49 and Asp-60.

This sequence belongs to the TrpA family. As to quaternary structure, tetramer of two alpha and two beta chains.

The enzyme catalyses (1S,2R)-1-C-(indol-3-yl)glycerol 3-phosphate + L-serine = D-glyceraldehyde 3-phosphate + L-tryptophan + H2O. It participates in amino-acid biosynthesis; L-tryptophan biosynthesis; L-tryptophan from chorismate: step 5/5. Its function is as follows. The alpha subunit is responsible for the aldol cleavage of indoleglycerol phosphate to indole and glyceraldehyde 3-phosphate. In Aquifex aeolicus (strain VF5), this protein is Tryptophan synthase alpha chain.